We begin with the raw amino-acid sequence, 336 residues long: Aspartate--ammonia ligase (336 aa).

Belongs to the class-II aminoacyl-tRNA synthetase family. AsnA subfamily.

It is found in the cytoplasm. The catalysed reaction is L-aspartate + NH4(+) + ATP = L-asparagine + AMP + diphosphate + H(+). It functions in the pathway amino-acid biosynthesis; L-asparagine biosynthesis; L-asparagine from L-aspartate (ammonia route): step 1/1. The chain is Aspartate--ammonia ligase from Limosilactobacillus fermentum (strain NBRC 3956 / LMG 18251) (Lactobacillus fermentum).